Reading from the N-terminus, the 362-residue chain is Patr class I histocompatibility antigen, B-2 alpha chain (362 aa).

An N-terminal signal peptide occupies residues 1 to 24; sequence MQVTAPRTVLLLLSAALALTETWA. Positions 25–114 are alpha-1; that stretch reads GSHSMKYFYT…LRGYYNQSEA (90 aa). At 25–308 the chain is on the extracellular side; the sequence is GSHSMKYFYT…EPSSQSTIPI (284 aa). N-linked (GlcNAc...) asparagine glycosylation is present at N110. An alpha-2 region spans residues 115-206; the sequence is GSHIIQRMYG…ENGKETLQRA (92 aa). Cystine bridges form between C125–C188 and C227–C283. The alpha-3 stretch occupies residues 207–298; that stretch reads DPPKTHVTHH…GLPKPLTLRW (92 aa). One can recognise an Ig-like C1-type domain in the interval 209-295; the sequence is PKTHVTHHPI…QHEGLPKPLT (87 aa). The tract at residues 299-308 is connecting peptide; it reads EPSSQSTIPI. A helical membrane pass occupies residues 309–332; that stretch reads VGIVAGLAVLAVVVIGAVVAAVMC. Residues 333 to 362 are Cytoplasmic-facing; that stretch reads RRKSSGGKGGSYSQAASSDSAQGSDVSLTA. The tract at residues 336-362 is disordered; it reads SSGGKGGSYSQAASSDSAQGSDVSLTA. The segment covering 343 to 362 has biased composition (low complexity); the sequence is SYSQAASSDSAQGSDVSLTA.

It belongs to the MHC class I family. Heterodimer of an alpha chain and a beta chain (beta-2-microglobulin).

The protein resides in the membrane. In terms of biological role, involved in the presentation of foreign antigens to the immune system. The polypeptide is Patr class I histocompatibility antigen, B-2 alpha chain (Pan troglodytes (Chimpanzee)).